A 187-amino-acid chain; its full sequence is MSKSALVILAPGAEEMEFIIAADVLRRAGIKVTVAGLNGGEAVKCSRDVQILPDTSLAQVASDKFDVVVLPGGLGGSNAMGESSLVGDLLRSQESGGGLIAAICAAPTVLAKHGVASGKSLTSYPSMKPQLVNNYSYVDDKTVVKDGNLITSRGPGTAYEFALKIAEELAGKEKVQEVAKGLLVAYN.

A Cysteine sulfinic acid (-SO2H) modification is found at C45. The active-site Nucleophile is the C104. C104 is subject to Cysteine sulfinic acid (-SO2H); alternate.

Post-translationally, oxidation of Cys-45 and Cys-104 in response to oxidative stress. Levels of oxidation increase with age. In terms of tissue distribution, expressed in the head and testis (at protein level). Ubiquitously expressed at constant levels.

Its subcellular location is the mitochondrion. The protein resides in the cytoplasm. It localises to the nucleus. Functionally, plays an important role in cell protection against oxidative stress and cell death by acting as a oxidative stress sensor. Does not play a role in methylglyoxal detoxification. Plays a role in mitochondrial function together with Pink1. In motor neurons regulates structural synaptic plasticity of locomotor behavior as part of the PTEN-phosphatidylinositol 3-kinase pathway in response to oxygen species (ROS) levels. The protein is Protein dj-1beta of Drosophila melanogaster (Fruit fly).